The sequence spans 787 residues: Phenylalanine--tRNA ligase beta subunit (787 aa).

One can recognise a tRNA-binding domain in the interval A39–R149. The region spanning P400–D475 is the B5 domain. 4 residues coordinate Mg(2+): D453, D459, E462, and E463. The 93-residue stretch at S694–R786 folds into the FDX-ACB domain.

The protein belongs to the phenylalanyl-tRNA synthetase beta subunit family. Type 1 subfamily. As to quaternary structure, tetramer of two alpha and two beta subunits. Requires Mg(2+) as cofactor.

The protein resides in the cytoplasm. The enzyme catalyses tRNA(Phe) + L-phenylalanine + ATP = L-phenylalanyl-tRNA(Phe) + AMP + diphosphate + H(+). This chain is Phenylalanine--tRNA ligase beta subunit, found in Neisseria gonorrhoeae (strain ATCC 700825 / FA 1090).